Here is a 351-residue protein sequence, read N- to C-terminus: AA9 family lytic polysaccharide monooxygenase A (351 aa).

The N-terminal stretch at Met1–Ala20 is a signal peptide. His21 and His107 together coordinate Cu(2+). Cysteines 76 and 196 form a disulfide. Positions 182 and 191 each coordinate O2. Tyr193 contributes to the Cu(2+) binding site. One can recognise a CBM1 domain in the interval Gly315 to Ile351.

Belongs to the polysaccharide monooxygenase AA9 family. Cu(2+) serves as cofactor.

Its subcellular location is the secreted. It carries out the reaction [(1-&gt;4)-beta-D-glucosyl]n+m + reduced acceptor + O2 = 4-dehydro-beta-D-glucosyl-[(1-&gt;4)-beta-D-glucosyl]n-1 + [(1-&gt;4)-beta-D-glucosyl]m + acceptor + H2O.. Lytic polysaccharide monooxygenase (LPMO) that depolymerizes crystalline and amorphous polysaccharides via the oxidation of scissile alpha- or beta-(1-4)-glycosidic bonds, yielding C1 and C4 oxidation products. Catalysis by LPMOs requires the reduction of the active-site copper from Cu(II) to Cu(I) by a reducing agent and H(2)O(2) or O(2) as a cosubstrate. This Podospora anserina (strain S / ATCC MYA-4624 / DSM 980 / FGSC 10383) (Pleurage anserina) protein is AA9 family lytic polysaccharide monooxygenase A.